The chain runs to 385 residues: tRNA-specific 2-thiouridylase MnmA (385 aa).

Residues 29 to 36 and L55 each bind ATP; that span reads GLSGGVDS. C116 (nucleophile) is an active-site residue. A disulfide bond links C116 and C225. G141 contacts ATP. The interaction with tRNA stretch occupies residues 175–177; that stretch reads KDQ. C225 (cysteine persulfide intermediate) is an active-site residue. An interaction with tRNA region spans residues 330 to 331; sequence RY.

Belongs to the MnmA/TRMU family.

It is found in the cytoplasm. The enzyme catalyses S-sulfanyl-L-cysteinyl-[protein] + uridine(34) in tRNA + AH2 + ATP = 2-thiouridine(34) in tRNA + L-cysteinyl-[protein] + A + AMP + diphosphate + H(+). Its function is as follows. Catalyzes the 2-thiolation of uridine at the wobble position (U34) of tRNA, leading to the formation of s(2)U34. In Prochlorococcus marinus (strain MIT 9301), this protein is tRNA-specific 2-thiouridylase MnmA.